Consider the following 642-residue polypeptide: Protein BZZ1 (642 aa).

The F-BAR domain occupies 6–272 (YKFSDELHDD…EIAKNEPVLD (267 aa)). Residues 113 to 190 (LDIAEKLKKL…QRNLKLSESD (78 aa)) adopt a coiled-coil conformation. A Phorbol-ester/DAG-type zinc finger spans residues 397 to 447 (FHDFKHVSFKLPTSCSYCREIIWGLSKRGCVCKNCGFKCHARCELLVPANC). 2 consecutive SH3 domains span residues 515–575 (ASKV…LNDE) and 584–642 (GDSS…VTDV).

It belongs to the BZZ1 family.

It is found in the cell tip. Its subcellular location is the cytoplasm. The protein localises to the cytoskeleton. It localises to the actin patch. Functionally, plays a role in endocytosis and trafficking to the vacuole. Functions with type I myosins to restore polarity of the actin cytoskeleton after NaCl stress. The polypeptide is Protein BZZ1 (bzz1) (Schizosaccharomyces pombe (strain 972 / ATCC 24843) (Fission yeast)).